Here is a 1819-residue protein sequence, read N- to C-terminus: U3 small nucleolar RNA-associated protein 10 (1819 aa).

One copy of the HEAT repeat lies at 1779–1817 (LIPYIAELLEDDDEDVELEVRKGLVKVLENVLGEPLDRY).

Belongs to the HEATR1/UTP10 family. In terms of assembly, component of the ribosomal small subunit (SSU) processome.

It is found in the nucleus. It localises to the nucleolus. Functionally, involved in nucleolar processing of pre-18S ribosomal RNA. Involved in ribosome biosynthesis. The chain is U3 small nucleolar RNA-associated protein 10 from Meyerozyma guilliermondii (strain ATCC 6260 / CBS 566 / DSM 6381 / JCM 1539 / NBRC 10279 / NRRL Y-324) (Yeast).